The sequence spans 487 residues: Arginine ADP-riboxanase CopC (487 aa).

The segment covering 1-12 (MRVENHSPSLSK) has biased composition (polar residues). The interval 1–27 (MRVENHSPSLSKLNPPEAGSGDPTAIG) is disordered. H137, Q138, S139, L143, A150, A152, N154, and L157 together coordinate NAD(+). H137 contributes to the nicotinamide binding site. Positions 139 and 143 each coordinate ADP-D-ribose. A152, N154, L157, G166, N167, T168, and F183 together coordinate ADP-D-ribose. N167 provides a ligand contact to NAD(+). F183 contributes to the NAD(+) binding site. 4 residues coordinate nicotinamide: F183, F184, H202, and F207. An NAD(+)-binding site is contributed by H202. ADP-D-ribose-binding residues include F207 and D230. 2 residues coordinate NAD(+): D230 and E325. E325 contributes to the nicotinamide binding site. Residue E325 is part of the active site. ANK repeat units follow at residues 368 to 398 (DAVT…EAGD) and 444 to 476 (SGET…LLSE).

The protein belongs to the OspC family. In terms of assembly, interacts with host calmodulin (CALM1, CALM2 and/or CALM3); specifically interacts with the apo form of calmodulin and calmodulin-binding is required to mediate arginine ADP-riboxanation of host caspases.

The protein resides in the secreted. It is found in the host cytoplasm. The catalysed reaction is L-arginyl-[protein] + NAD(+) = ADP-riboxanated L-argininyl-[protein] + nicotinamide + NH4(+) + H(+). Interaction with host calmodulin (CALM1, CALM2 and/or CALM3) is required to mediate arginine ADP-riboxanation of host caspases. In terms of biological role, ADP-riboxanase effector that inhibits host cell programmed cell death. Acts by mediating arginine ADP-riboxanation of host caspases (CASP3, CASP7, CASP8 and CASP9), blocking their processing and activation. ADP-riboxanation of host apoptotic caspases (CASP3, CASP7, CASP8 and CASP9) prevents their activation, thereby inhibiting host cell apoptosis. ADP-riboxanation of host CASP8 also inhibits host cell necroptosis. ADP-riboxanation of host CASP3 also abolishes pyroptosis by preventing its ability to cleave GSDME. May also able to inactivate CASP4/CASP11, blocking inhibiting LPS-induced pyroptosis; however this activity is unsure in vivo. ADP-riboxanation takes place in several steps: CopC first binds host caspases and NAD(+); NAD(+) is hydrolyzed to nicotinamide and ADP-D-ribose. CopC then transfers the ADP-D-ribose to the modified arginine of caspases and forms the ADP-D-ribose-deacylization on arginine, leading to deamination to remove one N-omega group on target arginine. The polypeptide is Arginine ADP-riboxanase CopC (Chromobacterium violaceum (strain ATCC 12472 / DSM 30191 / JCM 1249 / CCUG 213 / NBRC 12614 / NCIMB 9131 / NCTC 9757 / MK)).